Here is a 62-residue protein sequence, read N- to C-terminus: Large ribosomal subunit protein uL30 (62 aa).

Belongs to the universal ribosomal protein uL30 family. In terms of assembly, part of the 50S ribosomal subunit.

In Herpetosiphon aurantiacus (strain ATCC 23779 / DSM 785 / 114-95), this protein is Large ribosomal subunit protein uL30.